The following is a 461-amino-acid chain: Fumarate hydratase class II (461 aa).

Substrate contacts are provided by residues 97–99, 127–130, 137–139, and threonine 185; these read SGT, HPND, and SSN. Histidine 186 serves as the catalytic Proton donor/acceptor. The active site involves serine 316. Substrate-binding positions include serine 317 and 322–324; that span reads KVN.

The protein belongs to the class-II fumarase/aspartase family. Fumarase subfamily. Homotetramer.

Its subcellular location is the cytoplasm. The catalysed reaction is (S)-malate = fumarate + H2O. It participates in carbohydrate metabolism; tricarboxylic acid cycle; (S)-malate from fumarate: step 1/1. Functionally, involved in the TCA cycle. Catalyzes the stereospecific interconversion of fumarate to L-malate. This chain is Fumarate hydratase class II, found in Staphylococcus haemolyticus (strain JCSC1435).